The following is a 274-amino-acid chain: DNA damage-inducible protein D (274 aa).

This Escherichia coli (strain K12) protein is DNA damage-inducible protein D (dinD).